The following is a 498-amino-acid chain: Pentatricopeptide repeat-containing protein At2g15980 (498 aa).

PPR repeat units lie at residues 244–274, 280–314, 315–349, 350–384, 385–423, 424–458, and 459–489; these read NATT…MEEE, NVYS…GVVY, DIVA…GIEC, TCLT…GFEA, DGLT…MFYP, SRNC…GFKP, and SQET…MAES.

This sequence belongs to the PPR family. P subfamily.

This Arabidopsis thaliana (Mouse-ear cress) protein is Pentatricopeptide repeat-containing protein At2g15980.